The primary structure comprises 1381 residues: Peroxisomal ATPase PEX6 (1381 aa).

A compositionally biased stretch (polar residues) spans 1 to 10 (MTAPNSTPAS). Disordered stretches follow at residues 1–23 (MTAP…QDKP), 247–315 (VRTS…DNLS), 333–374 (TVTG…DRPR), and 467–499 (YSSR…NPPA). Basic residues predominate over residues 11-20 (SRKRVRRRRQ). 2 stretches are compositionally biased toward acidic residues: residues 270 to 284 (AEDD…AEED) and 296 to 315 (TDAD…DNLS). Composition is skewed to polar residues over residues 333-345 (TVTG…TGTP), 355-367 (GPGS…TATT), and 487-499 (FFEA…NPPA). 1031–1038 (GPPGTGKT) is a binding site for ATP. Composition is skewed to basic and acidic residues over residues 1294 to 1305 (GAKDKDKKKEGA) and 1337 to 1350 (STKK…KAAD). Residues 1294-1381 (GAKDKDKKKE…GGDEDEGLYD (88 aa)) form a disordered region. Over residues 1372 to 1381 (GGDEDEGLYD) the composition is skewed to acidic residues.

Belongs to the AAA ATPase family. In terms of assembly, interacts with PEX1; forming the PEX1-PEX6 AAA ATPase complex, which is composed of a heterohexamer formed by a trimer of PEX1-PEX6 dimers.

Its subcellular location is the cytoplasm. The protein localises to the cytosol. It is found in the peroxisome membrane. The enzyme catalyses ATP + H2O = ADP + phosphate + H(+). Component of the PEX1-PEX6 AAA ATPase complex, a protein dislocase complex that mediates the ATP-dependent extraction of the PEX5 receptor from peroxisomal membranes, an essential step for PEX5 recycling. Specifically recognizes PEX5 monoubiquitinated at 'Cys-6', and pulls it out of the peroxisome lumen through the PEX2-PEX10-PEX12 retrotranslocation channel. Extraction by the PEX1-PEX6 AAA ATPase complex is accompanied by unfolding of the TPR repeats and release of bound cargo from PEX5. The protein is Peroxisomal ATPase PEX6 (pex-6) of Neurospora crassa (strain ATCC 24698 / 74-OR23-1A / CBS 708.71 / DSM 1257 / FGSC 987).